A 399-amino-acid polypeptide reads, in one-letter code: Enoyl-[acyl-carrier-protein] reductase [NADH] (399 aa).

Residues 48-53, 74-75, 111-112, and 139-140 each bind NAD(+); these read GASTGY, FE, DA, and LA. Substrate is bound at residue Y225. Y235 (proton donor) is an active-site residue. NAD(+) is bound by residues K244 and 274–276; that span reads VVT.

It belongs to the TER reductase family. In terms of assembly, monomer.

The catalysed reaction is a 2,3-saturated acyl-[ACP] + NAD(+) = a (2E)-enoyl-[ACP] + NADH + H(+). Its pathway is lipid metabolism; fatty acid biosynthesis. Involved in the final reduction of the elongation cycle of fatty acid synthesis (FAS II). Catalyzes the reduction of a carbon-carbon double bond in an enoyl moiety that is covalently linked to an acyl carrier protein (ACP). This Yersinia enterocolitica serotype O:8 / biotype 1B (strain NCTC 13174 / 8081) protein is Enoyl-[acyl-carrier-protein] reductase [NADH].